The primary structure comprises 89 residues: Dynein light chain (89 aa).

The protein belongs to the dynein light chain family. Tegument.

It localises to the cytoplasm. Its subcellular location is the cytoskeleton. Functionally, acts as a non-catalytic accessory component of a dynein complex. The protein is Dynein light chain (DLC) of Schistosoma mansoni (Blood fluke).